The chain runs to 520 residues: Cobalt-zinc-cadmium resistance protein CzcB (520 aa).

The chain crosses the membrane as a helical span at residues 9 to 29 (AAIAAIVLVGGVATGGVLLSG). The interval 28-85 (SGRSAPEEQGGHSESKGHGDTEHHGKQAAEADHKDDKSHGDGEHHEVKKGPNGGALFS) is disordered. The segment covering 32 to 76 (APEEQGGHSESKGHGDTEHHGKQAAEADHKDDKSHGDGEHHEVKK) has biased composition (basic and acidic residues). The stretch at 286–320 (EQKISAEQDYLSARNALQEAQISVQNAQQKLTAIG) forms a coiled coil.

This sequence belongs to the membrane fusion protein (MFP) (TC 8.A.1) family.

It is found in the cell inner membrane. Its function is as follows. CzcA and CzcB together would act in zinc efflux nearly as effectively as the complete czc efflux system (CzcABC). The CzcB protein is thought to funnel zinc cations to the CzcA transport protein. In Cupriavidus metallidurans (strain ATCC 43123 / DSM 2839 / NBRC 102507 / CH34) (Ralstonia metallidurans), this protein is Cobalt-zinc-cadmium resistance protein CzcB (czcB).